Reading from the N-terminus, the 582-residue chain is Leucine-rich repeat protein SHOC-2 (582 aa).

Composition is skewed to basic and acidic residues over residues 1–29 and 36–57; these read MSSS…KEAK and KESK…KKDS. The segment at 1-88 is disordered; sequence MSSSLGKEKD…PGTRKKSSNA (88 aa). The short motif at 63-66 is the RVxF motif; important for interaction with PP1c element; it reads GVAF. LRR repeat units lie at residues 101 to 122, 124 to 145, 147 to 169, 170 to 191, 193 to 214, 216 to 237, 239 to 260, 262 to 283, 285 to 307, 308 to 329, 332 to 353, 356 to 377, 380 to 400, 403 to 424, 426 to 448, 449 to 470, 472 to 494, 495 to 516, 518 to 540, and 542 to 563; these read NSMR…IKEL, QLTE…VGCL, NLMT…DNLK, KLRM…VYRL, SLTT…IKNL, KLSM…IGEL, NLIT…IGNC, QITN…IGNL, SLSR…AKCS, ALEE…LLSS, KLNS…GPSQ, TIYS…IFSR, VLSK…DFGT, SMVE…VSGL, SLEV…GNLR, KLRE…IAYL, DLQK…GHLT, NLTH…IGTL, NLEE…LALC, and KLSI…IVAG.

This sequence belongs to the SHOC2 family. Component of the SHOC2-MRAS-PP1c (SMP) complex consisting of SHOC2, GTP-bound M-Ras/MRAS and the catalytic subunit of protein phosphatase 1 (either PPP1CA, PPP1CB or PPP1CC). SHOC2 and PP1c preferably bind M-Ras/MRAS, but they also bind K-Ras/KRAS, N-Ras/NRAS and H-Ras/HRAS; these interactions are GTP-dependent and both SHOC2 and PP1c are required to form a stable complex. Interacts with PP1c in the absence of Ras GTPases. Interacts with M-Ras/MRAS and RAF1. Interacts with ERBIN; disrupts the interaction with RAF1 and Ras, preventing the activation of the Ras signaling pathway. Interacts with LZTR1.

The protein resides in the cytoplasm. The protein localises to the nucleus. In terms of biological role, core component of the SHOC2-MRAS-PP1c (SMP) holophosphatase complex that regulates activation of the MAPK pathway. Acts as a scaffolding protein in the SMP complex. The SMP complex specifically dephosphorylates the inhibitory phosphorylation at 'Ser-259' of RAF1 kinase, 'Ser-365' of BRAF kinase and 'Ser-214' of ARAF kinase, stimulating their kinase activities. The SMP complex enhances the dephosphorylation activity and substrate specificity of PP1c. The chain is Leucine-rich repeat protein SHOC-2 (SHOC2) from Homo sapiens (Human).